A 29-amino-acid chain; its full sequence is uncharacterized protein (29 aa).

A helical membrane pass occupies residues 7-27 (FSLVTTIIVLGLIVAVGLTAA).

The protein resides in the cell inner membrane. This is an uncharacterized protein from Escherichia coli O6:K15:H31 (strain 536 / UPEC).